Consider the following 427-residue polypeptide: Gamma-glutamyl phosphate reductase (427 aa).

It belongs to the gamma-glutamyl phosphate reductase family.

The protein resides in the cytoplasm. The enzyme catalyses L-glutamate 5-semialdehyde + phosphate + NADP(+) = L-glutamyl 5-phosphate + NADPH + H(+). The protein operates within amino-acid biosynthesis; L-proline biosynthesis; L-glutamate 5-semialdehyde from L-glutamate: step 2/2. Functionally, catalyzes the NADPH-dependent reduction of L-glutamate 5-phosphate into L-glutamate 5-semialdehyde and phosphate. The product spontaneously undergoes cyclization to form 1-pyrroline-5-carboxylate. The chain is Gamma-glutamyl phosphate reductase from Sinorhizobium medicae (strain WSM419) (Ensifer medicae).